Consider the following 600-residue polypeptide: DNA ligase (600 aa).

Residue aspartate 258 coordinates ATP. Lysine 260 functions as the N6-AMP-lysine intermediate in the catalytic mechanism. ATP contacts are provided by arginine 265, arginine 280, glutamate 310, phenylalanine 350, arginine 427, and lysine 433.

It belongs to the ATP-dependent DNA ligase family. The cofactor is Mg(2+).

The catalysed reaction is ATP + (deoxyribonucleotide)n-3'-hydroxyl + 5'-phospho-(deoxyribonucleotide)m = (deoxyribonucleotide)n+m + AMP + diphosphate.. Inhibited by PCNA123 and PCNA323. Its function is as follows. DNA ligase that seals nicks in double-stranded DNA during DNA replication, DNA recombination and DNA repair. The sequence is that of DNA ligase from Sulfurisphaera tokodaii (strain DSM 16993 / JCM 10545 / NBRC 100140 / 7) (Sulfolobus tokodaii).